The chain runs to 1175 residues: Atrophin-1 (1175 aa).

3 disordered regions span residues 1–595, 608–752, and 770–847; these read MKTR…VTTS, SSPA…ARFN, and VPLE…HRPP. The short motif at 16-32 is the Nuclear localization signal element; it reads RKKEAPGPREELRSRGR. A compositionally biased stretch (basic and acidic residues) spans 17–29; it reads KKEAPGPREELRS. At S34 the chain carries Phosphoserine. Basic and acidic residues predominate over residues 45-63; the sequence is GKAEKSRQTAKKARIEEPS. Residues S77, S79, S101, S103, and S107 each carry the phosphoserine modification. Positions 108–128 are enriched in basic and acidic residues; the sequence is LDGRSINDDGSSDPRDIDQDN. A compositionally biased stretch (polar residues) spans 129–152; the sequence is RSTSPSIYSPGSVENDSDSSSGLS. 2 stretches are compositionally biased toward pro residues: residues 158–174 and 208–217; these read PYHP…PPDS and GPPPGAPPTH. Composition is skewed to low complexity over residues 240-253 and 262-273; these read GAAA…SGGK and IPISSSGASGAP. Residues 345 to 374 show a composition bias toward pro residues; that stretch reads PPGPEKGPTLAPSPHPLPPASSSAPGPPMR. The segment covering 378–396 has biased composition (low complexity); the sequence is SSSSSSAAASSSSSSSSAS. Positions 416 to 437 are enriched in polar residues; it reads SMSVSNQPPKYTQPSLPSQAVW. A compositionally biased stretch (basic residues) spans 476–491; the sequence is THHHHQQQPQQQHHHG. Positions 503–553 are involved in binding BAIAP2; the sequence is HPLESSNSHHAHPYNMSPSLGSLRPYPPGPAHLPPPHGQVSYNQAGPNGPP. Residues 527-539 are compositionally biased toward pro residues; sequence PYPPGPAHLPPPH. Residues 547–584 are compositionally biased toward low complexity; it reads AGPNGPPVSSSNSSGSSSQASYSCSHPSSSQGPQGASY. S617 is subject to Phosphoserine. Position 626 is an N6-acetyllysine (K626). A Phosphothreonine modification is found at T638. S646 is modified (phosphoserine). T654 carries the phosphothreonine modification. Composition is skewed to pro residues over residues 693–703 and 722–737; these read LPPPPAAPTTG and PESP…PPPK. S724 is subject to Phosphoserine; by MAPK8. S731 and S733 each carry phosphoserine. Positions 780-824 are enriched in basic and acidic residues; sequence KRADLVEKVRREAEQRAREEKEREREREREKEREREKERELERSV. A required for interaction with FAT1 region spans residues 864 to 879; that stretch reads DTPALRTLSEYARPHV. S881 carries the phosphoserine modification. The disordered stretch occupies residues 913 to 932; the sequence is PAAREREREARERDLRDRLK. The segment covering 914–932 has biased composition (basic and acidic residues); it reads AAREREREARERDLRDRLK. A Nuclear export signal motif is present at residues 1018–1026; the sequence is ALGNDPLAR. R1100 is modified (asymmetric dimethylarginine). K1168 is covalently cross-linked (Glycyl lysine isopeptide (Lys-Gly) (interchain with G-Cter in SUMO2)).

In terms of assembly, interacts with BAIAP2, WWP1, WWP2, WWP3 and RERE. Interacts (via its N-terminus) with MTG8; the interaction enhances transcriptional repression of MTG8. Interacts with PQBP1. Interacts with NR2E1; the interaction represses the transcriptional activity of NR2E1. Interacts with FAT1 (via a C-terminal domain). Phosphorylated in vitro by MAPK8/JNK1 on Ser-724. In terms of tissue distribution, widely expressed. Most abundant in the brain.

The protein resides in the cytoplasm. It localises to the perinuclear region. It is found in the cell junction. Its subcellular location is the nucleus. In terms of biological role, transcriptional corepressor. Corepressor of MTG8 transcriptional repression. Has some intrinsic repression activity which is independent of the number of the poly-Q repeats. Recruits NR2E1 to repress transcription. Promotes vascular smooth cell (VSMC) migration and orientation. In Mus musculus (Mouse), this protein is Atrophin-1 (Atn1).